A 196-amino-acid polypeptide reads, in one-letter code: Molybdenum cofactor guanylyltransferase (196 aa).

GTP is bound by residues Leu10–Gly12, Lys23, Asn51, Asp69, and Asp99. Asp99 provides a ligand contact to Mg(2+).

This sequence belongs to the MobA family. Monomer. Mg(2+) serves as cofactor.

The protein localises to the cytoplasm. The catalysed reaction is Mo-molybdopterin + GTP + H(+) = Mo-molybdopterin guanine dinucleotide + diphosphate. Its function is as follows. Transfers a GMP moiety from GTP to Mo-molybdopterin (Mo-MPT) cofactor (Moco or molybdenum cofactor) to form Mo-molybdopterin guanine dinucleotide (Mo-MGD) cofactor. The sequence is that of Molybdenum cofactor guanylyltransferase from Shewanella baltica (strain OS155 / ATCC BAA-1091).